A 106-amino-acid chain; its full sequence is Immunoglobulin lambda constant 3 (106 aa).

The Ig-like domain maps to 7-101 (PSVTLFPPSS…EGSTVEKTVA (95 aa)). C28 and C87 are disulfide-bonded.

In terms of assembly, immunoglobulins are composed of two identical heavy chains and two identical light chains; disulfide-linked.

The protein resides in the secreted. It localises to the cell membrane. Constant region of immunoglobulin light chains. Immunoglobulins, also known as antibodies, are membrane-bound or secreted glycoproteins produced by B lymphocytes. In the recognition phase of humoral immunity, the membrane-bound immunoglobulins serve as receptors which, upon binding of a specific antigen, trigger the clonal expansion and differentiation of B lymphocytes into immunoglobulins-secreting plasma cells. Secreted immunoglobulins mediate the effector phase of humoral immunity, which results in the elimination of bound antigens. The antigen binding site is formed by the variable domain of one heavy chain, together with that of its associated light chain. Thus, each immunoglobulin has two antigen binding sites with remarkable affinity for a particular antigen. The variable domains are assembled by a process called V-(D)-J rearrangement and can then be subjected to somatic hypermutations which, after exposure to antigen and selection, allow affinity maturation for a particular antigen. The protein is Immunoglobulin lambda constant 3 of Homo sapiens (Human).